The primary structure comprises 130 residues: Small ribosomal subunit protein uS8 (130 aa).

Belongs to the universal ribosomal protein uS8 family. Part of the 30S ribosomal subunit. Contacts proteins S5 and S12.

In terms of biological role, one of the primary rRNA binding proteins, it binds directly to 16S rRNA central domain where it helps coordinate assembly of the platform of the 30S subunit. This chain is Small ribosomal subunit protein uS8, found in Edwardsiella ictaluri (strain 93-146).